The chain runs to 317 residues: Urease accessory protein 6 (317 aa).

The protein belongs to the UreF family. In terms of assembly, URE4, URE6 and URE7 may form a complex that acts as a GTP-hydrolysis-dependent molecular chaperone, activating the urease apoprotein URE1.

Urease accessory protein required for the maturation and activation of urease via the functional incorporation of the urease nickel metallocenter. Plays a role in host brain invasion. The polypeptide is Urease accessory protein 6 (Cryptococcus neoformans var. grubii serotype A (strain H99 / ATCC 208821 / CBS 10515 / FGSC 9487) (Filobasidiella neoformans var. grubii)).